We begin with the raw amino-acid sequence, 70 residues long: DNA gyrase inhibitor YacG (70 aa).

Zn(2+) is bound by residues cysteine 20, cysteine 23, cysteine 35, and cysteine 39.

It belongs to the DNA gyrase inhibitor YacG family. As to quaternary structure, interacts with GyrB. Zn(2+) is required as a cofactor.

In terms of biological role, inhibits all the catalytic activities of DNA gyrase by preventing its interaction with DNA. Acts by binding directly to the C-terminal domain of GyrB, which probably disrupts DNA binding by the gyrase. The polypeptide is DNA gyrase inhibitor YacG (Rhizobium etli (strain CIAT 652)).